Here is a 396-residue protein sequence, read N- to C-terminus: L-lactate dehydrogenase (396 aa).

One can recognise an FMN hydroxy acid dehydrogenase domain in the interval 1-380 (MIISAASDYR…SGDSLVQELG (380 aa)). Tyr-24 serves as a coordination point for substrate. Positions 106 and 127 each coordinate FMN. Tyr-129 provides a ligand contact to substrate. Thr-155 is a binding site for FMN. Position 164 (Arg-164) interacts with substrate. Lys-251 serves as a coordination point for FMN. His-275 (proton acceptor) is an active-site residue. A substrate-binding site is contributed by Arg-278. FMN is bound at residue 306–330 (DSGIRNGLDVVRMIALGADTVLLGR).

This sequence belongs to the FMN-dependent alpha-hydroxy acid dehydrogenase family. FMN serves as cofactor.

It is found in the cell inner membrane. It carries out the reaction (S)-lactate + A = pyruvate + AH2. In terms of biological role, catalyzes the conversion of L-lactate to pyruvate. Is coupled to the respiratory chain. The sequence is that of L-lactate dehydrogenase from Salmonella paratyphi C (strain RKS4594).